Consider the following 269-residue polypeptide: MQKPVNNNFKESLLRTVESLRKSIRSGEMDDSTSGLVPGLVQANIVILPKIWAHDFLLFCQKNPIACPLIDVFDAGQFLLNSLGKDIDVRTDIPEYCVFVGGVKTEVKKDISDLWQDDFVVFALGCSFSFEYALQQAGLSIANLESNSNVSMYETNVPTKSVGVFQGNVVVSMRPFTPAQAIKAIQITSQFPLAHGAPIHIGKPEMIGINSLSNPSFGDSVEINEDHIPVFWGCGVTPQVVISNAKIPMFITHAPGKMLITDKLYSELR.

This sequence belongs to the D-glutamate cyclase family.

This chain is Putative hydro-lyase Swoo_1731, found in Shewanella woodyi (strain ATCC 51908 / MS32).